The primary structure comprises 535 residues: MSTLYQVNKIKEILIRFLETIIINGMNSFSSTVYGQNAERSNTPTLIDPSNKETANVCPISKNLFQSYPKGSYRNSQRLTSRNGLDRFIPMTSNKDTISLGRHSSLSRNLVNKTKNASETYQQLLEYALEVERDDNVFTYAKLQKSDMTQKCPTMVASEKDNKGKLNEKKNRSPENLLPFRILDAPELRDDFYTSLLSWSPKGDLAIGLAENIYLWSKELGPTRVLEESIYDVSSVAYSYNGDILAVGRVDGTLQFWQDNERVPRISIHHPGDIGVLAWKPVLETNRLLVGKGNGNIFVYDIIWSESTSKAVLVATITNAHDEQVCGLTWNHDGSQFASGGNDNRVCLFKGSDLRQPLYVWQQNAAVKALSFCPWQRSLLATGAGSHDKHIRFYNCFNGKKIDELYCGAQITSIHWSPKYREFSVTFGYSLETVQHRFAVYSWPQLECLVSVLPSVPDIRCVHSVLTSQLNETTGRCEMTDSIIIASSNETIKFFDLSEESSWHNSRVLTWHGIFDSQILEMLEGIDGKIDSHLR.

WD repeat units follow at residues 189 to 226 (RDDF…TRVL), 228 to 267 (ESIY…PRIS), 269 to 314 (HHPG…AVLV), 320 to 359 (AHDE…QPLY), 362 to 404 (QQNA…KIDE), and 462 to 505 (VHSV…SWHN).

The protein belongs to the WD repeat CDC20/Fizzy family.

This is an uncharacterized protein from Schizosaccharomyces pombe (strain 972 / ATCC 24843) (Fission yeast).